Reading from the N-terminus, the 69-residue chain is UPF0337 protein YjbJ (69 aa).

It belongs to the UPF0337 (CsbD) family.

In Escherichia coli O157:H7, this protein is UPF0337 protein YjbJ (yjbJ).